A 463-amino-acid polypeptide reads, in one-letter code: Glutamate--tRNA ligase 1 (463 aa).

The 'HIGH' region motif lies at 11 to 21 (PSPTGYLHIGG). The 'KMSKS' region motif lies at 240 to 244 (KLSKR). Residue lysine 243 participates in ATP binding.

The protein belongs to the class-I aminoacyl-tRNA synthetase family. Glutamate--tRNA ligase type 1 subfamily. Monomer.

The protein localises to the cytoplasm. It catalyses the reaction tRNA(Glu) + L-glutamate + ATP = L-glutamyl-tRNA(Glu) + AMP + diphosphate. Catalyzes the attachment of glutamate to tRNA(Glu) in a two-step reaction: glutamate is first activated by ATP to form Glu-AMP and then transferred to the acceptor end of tRNA(Glu). This chain is Glutamate--tRNA ligase 1, found in Campylobacter jejuni subsp. doylei (strain ATCC BAA-1458 / RM4099 / 269.97).